The following is a 75-amino-acid chain: uncharacterized protein (75 aa).

The protein belongs to the HSBP1 family.

This is an uncharacterized protein from Schizosaccharomyces pombe (strain 972 / ATCC 24843) (Fission yeast).